The sequence spans 466 residues: MTLKASEGEGGGGMRTALSDLYLEHLLQKHNRPEPVSPQLSAVMEDMYTNGPAALGSPAQTQGQEARKVRLIQFEKVTEEPMGITLKLNEKQSCTVARILHGGMVHRQGSLHVGDEILEINGTNVTNHSVDQLQKAMKETKGMISLKVIPNQQNRLPALQMFMRAQFDYDPRKDNLIPCKEAGLKFLTGDVIQIINKDDSNWWQGRVEGSSQESAGLIPSPELQEWRVASGAHSAPSEAPSCSPFGKKKKYKDKYLAKHSAIFDQLDVVSYEEVVRLPAFKRKTLVLIGASGVGRSHIKSALLSQNPDKFAYPAPYTTRPARKSEEDGKEYHFISTEEMTRSISANEFLEFGSYQGNMFGTKFETVHQIHKQDKVAILDIEPQTLKIVRTAELSPFIVFIAPTDQGTQTDTLQQLQKDSEAIRSQYAHYFDLSLVNNSVEETLKTLQETFDQACRSPQWVPVSWVY.

Thr-2 carries the post-translational modification N-acetylthreonine. Ser-19 is modified (phosphoserine). A Phosphothreonine modification is found at Thr-49. Residues Ser-57 and Ser-110 each carry the phosphoserine modification. The 82-residue stretch at 71 to 152 (LIQFEKVTEE…MISLKVIPNQ (82 aa)) folds into the PDZ domain. In terms of domain architecture, SH3 spans 158–228 (ALQMFMRAQF…PSPELQEWRV (71 aa)). Residue Ser-243 is modified to Phosphoserine. The tract at residues 268–466 (VVSYEEVVRL…PQWVPVSWVY (199 aa)) is interaction with PALS1. The Guanylate kinase-like domain occupies 282 to 451 (RKTLVLIGAS…TLKTLQETFD (170 aa)).

It belongs to the MAGUK family. As to quaternary structure, heterodimer with PALS1. Interacts with DLG5 and NF2. Interacts (via guanylate kinase-like domain) with WHRN (via third PDZ domain). Interacts with PALS1. Post-translationally, palmitoylated.

Its subcellular location is the cell membrane. It localises to the cell projection. The protein localises to the stereocilium. Its function is as follows. Essential regulator of neutrophil polarity. Regulates neutrophil polarization by regulating AKT1 phosphorylation through a mechanism that is independent of PIK3CG activity. The sequence is that of 55 kDa erythrocyte membrane protein (MPP1) from Bos taurus (Bovine).